Consider the following 359-residue polypeptide: Pheromone receptor 1 (359 aa).

Helical transmembrane passes span 5–25 (VTPF…GWHI), 33–53 (ITLS…SVAW), 71–87 (LRHA…LVIA), 110–130 (IIID…LMIV), 147–167 (FLSL…IVSF), 206–226 (LLVL…GSVS), and 268–288 (LILS…MFGL). Residues 335–359 (TSGGIDGSPHSEKFSINTPTKYEEA) are disordered. Polar residues predominate over residues 348-359 (FSINTPTKYEEA).

The protein belongs to the G-protein coupled receptor 4 family.

It localises to the membrane. Functionally, receptor for the A2 pheromone, a prenylated mating factor. The sequence is that of Pheromone receptor 1 (PRA1) from Ustilago hordei (Barley covered smut fungus).